The primary structure comprises 376 residues: Fibromodulin (376 aa).

The first 18 residues, 1–18 (MQWTSLLLLAGLFSLSQA), serve as a signal peptide directing secretion. Residue glutamine 19 is modified to Pyrrolidone carboxylic acid. Residues tyrosine 20, tyrosine 38, tyrosine 39, tyrosine 45, tyrosine 47, tyrosine 53, and tyrosine 55 each carry the sulfotyrosine modification. An LRRNT domain is found at 67–105 (SPSPPDPRDCPQECDCPPNFPTAMYCDNRNLKYLPFVPS). LRR repeat units lie at residues 106 to 127 (RMKYVYFQNNQITSIQEGVFDN), 130 to 151 (GLLWIALHGNQITSDKVGRKVF), 156 to 176 (HLERLYLDHNNLTRMPGPLPR), 177 to 198 (SLRELHLDHNQISRVPNNALEG), 201 to 222 (NLTALYLQHNEIQEVGSSMRGL), 224 to 245 (SLILLDLSYNHLRKVPDGLPSA), 246 to 266 (LEQLYMEHNNVYTVPDSYFRG), and 269 to 289 (KLLYVRLSHNSLTNNGLASNT). Asparagine 127 is a glycosylation site (N-linked (GlcNAc...) (keratan sulfate) asparagine). Asparagine 166 is a glycosylation site (N-linked (GlcNAc...) (keratan sulfate) asparagine). Residue asparagine 201 is glycosylated (N-linked (GlcNAc...) (keratan sulfate) asparagine). Asparagine 291 carries an N-linked (GlcNAc...) (keratan sulfate) asparagine glycan. 2 LRR repeats span residues 294-315 (SLLELDLSYNQLQKIPPVNTNL) and 316-335 (ENLYLQGNRINEFSISSFCT). A disulfide bond links cysteine 334 and cysteine 367. Asparagine 341 carries an N-linked (GlcNAc...) asparagine glycan. The stretch at 344-365 (KLQVLRLDGNEIKRSAMPADAP) is one LRR 11 repeat.

Belongs to the small leucine-rich proteoglycan (SLRP) family. SLRP class II subfamily. As to quaternary structure, binds to type I and type II collagen. Binds keratan sulfate chains.

The protein resides in the secreted. It is found in the extracellular space. It localises to the extracellular matrix. Affects the rate of fibrils formation. May have a primary role in collagen fibrillogenesis. This chain is Fibromodulin (FMOD), found in Homo sapiens (Human).